Reading from the N-terminus, the 737-residue chain is Probable serine/threonine-protein kinase DDB_G0269628 (737 aa).

The region spanning 8 to 488 (YKLIKDLRSG…TLQKMDTSLL (481 aa)) is the Protein kinase domain. Residues 14-22 (LRSGGEGKA) and Lys-36 each bind ATP. Disordered stretches follow at residues 155-251 (NTIQ…KKCS) and 278-298 (TTAA…SSSN). Residues 156-167 (TIQHSHSSSSLV) show a composition bias toward polar residues. The span at 168 to 229 (NGTTSPTNAT…PSSPSSPLSP (62 aa)) shows a compositional bias: low complexity. Asp-349 acts as the Proton acceptor in catalysis.

The protein belongs to the protein kinase superfamily. NEK Ser/Thr protein kinase family. NIMA subfamily.

The catalysed reaction is L-seryl-[protein] + ATP = O-phospho-L-seryl-[protein] + ADP + H(+). The enzyme catalyses L-threonyl-[protein] + ATP = O-phospho-L-threonyl-[protein] + ADP + H(+). This is Probable serine/threonine-protein kinase DDB_G0269628 from Dictyostelium discoideum (Social amoeba).